The primary structure comprises 352 residues: Inner membrane protein YeeA (352 aa).

The Cytoplasmic segment spans residues 1-25; that stretch reads MRADKSLSPFEIRVYRHYRIVHGTR. 2 consecutive transmembrane segments (helical) span residues 26-46 and 47-67; these read VALAFLLTFLIIRLFTIPEST and WPLVTMVVIMGPISFWGNVVP. R68 is a topological domain (cytoplasmic). The helical transmembrane segment at 69 to 89 threads the bilayer; that stretch reads AFERIGGTVLGSILGLIALQL. Residue E90 is a topological domain, periplasmic. Residues 91 to 111 traverse the membrane as a helical segment; that stretch reads LISLPLMLVWCAAAMFLCGWL. Residues 112 to 117 lie on the Cytoplasmic side of the membrane; that stretch reads ALGKKP. Residues 118-138 traverse the membrane as a helical segment; that stretch reads YQGLLIGVTLAIVVGSPTGEI. Topologically, residues 139–147 are periplasmic; the sequence is DTALWRSGD. Residues 148–168 traverse the membrane as a helical segment; it reads VILGSLLAMLFTGIWPQRAFI. Residues 169-352 are Cytoplasmic-facing; that stretch reads HWRIQLAKSL…SNLICRALRK (184 aa).

The protein localises to the cell inner membrane. The protein is Inner membrane protein YeeA (yeeA) of Escherichia coli (strain K12).